The primary structure comprises 158 residues: Small ribosomal subunit protein eS10 (158 aa).

Residues Glu99–Pro158 are disordered. Gly residues predominate over residues Gly149 to Pro158.

This sequence belongs to the eukaryotic ribosomal protein eS10 family.

It localises to the cytoplasm. This Spodoptera frugiperda (Fall armyworm) protein is Small ribosomal subunit protein eS10 (RpS10).